Consider the following 349-residue polypeptide: Interferon regulatory factor 2 (349 aa).

A DNA-binding region (IRF tryptophan pentad repeat) is located at residues 5-113 (RMRMRPWLEE…NAFRVYRMLP (109 aa)). N6-acetyllysine occurs at positions 75 and 78. K137 participates in a covalent cross-link: Glycyl lysine isopeptide (Lys-Gly) (interchain with G-Cter in SUMO); alternate. K137 participates in a covalent cross-link: Glycyl lysine isopeptide (Lys-Gly) (interchain with G-Cter in SUMO2); alternate. K166 participates in a covalent cross-link: Glycyl lysine isopeptide (Lys-Gly) (interchain with G-Cter in SUMO). Phosphoserine is present on S225. The segment covering 230–239 (YAESETTDSV) has biased composition (polar residues). The segment at 230–253 (YAESETTDSVASDEENAEGRPHWR) is disordered. K260 participates in a covalent cross-link: Glycyl lysine isopeptide (Lys-Gly) (interchain with G-Cter in SUMO2). K293 participates in a covalent cross-link: Glycyl lysine isopeptide (Lys-Gly) (interchain with G-Cter in SUMO). The segment at 303–349 (SSWPPFTDLPLPAPVTPTPSSSRPDRETRASVIKKTSDITQARVKSC) is disordered.

Belongs to the IRF family. Interacts with BRD7, IRF2BP1 and IRF2BP2. Interacts with CREBBP in growing cells; the interaction acetylates IRF2 and regulates IRF2-dependent H4 promoter activity. Acetylated by CBP/ p300 during cell-growth. Acetylation on Lys-75 is required for stimulation of H4 promoter activity. Post-translationally, the major sites of sumoylation are Lys-137 and Lys-293. Sumoylation with SUMO1 increases its transcriptional repressor activity on IRF1 and diminishes its ability to activate ISRE and H4 promoter.

The protein localises to the nucleus. Its function is as follows. Specifically binds to the upstream regulatory region of type I IFN and IFN-inducible MHC class I genes (the interferon consensus sequence (ICS)) and represses those genes. Also acts as an activator for several genes including H4 and IL7. Constitutively binds to the ISRE promoter to activate IL7. Involved in cell cycle regulation through binding the site II (HiNF-M) promoter region of H4 and activating transcription during cell growth. Antagonizes IRF1 transcriptional activation. The chain is Interferon regulatory factor 2 (Irf2) from Mus musculus (Mouse).